The sequence spans 333 residues: Beta-ketoacyl-[acyl-carrier-protein] synthase III (333 aa).

Residues Cys112 and His255 contribute to the active site. Positions 256–260 are ACP-binding; it reads QANQR. Residue Asn285 is part of the active site.

The protein belongs to the thiolase-like superfamily. FabH family. In terms of assembly, homodimer.

Its subcellular location is the cytoplasm. It catalyses the reaction malonyl-[ACP] + acetyl-CoA + H(+) = 3-oxobutanoyl-[ACP] + CO2 + CoA. The protein operates within lipid metabolism; fatty acid biosynthesis. In terms of biological role, catalyzes the condensation reaction of fatty acid synthesis by the addition to an acyl acceptor of two carbons from malonyl-ACP. Catalyzes the first condensation reaction which initiates fatty acid synthesis and may therefore play a role in governing the total rate of fatty acid production. Possesses both acetoacetyl-ACP synthase and acetyl transacylase activities. Its substrate specificity determines the biosynthesis of branched-chain and/or straight-chain of fatty acids. This chain is Beta-ketoacyl-[acyl-carrier-protein] synthase III, found in Synechococcus sp. (strain RCC307).